Reading from the N-terminus, the 104-residue chain is MSSTLDSQHDLVAEKQSARTAPPPMYQVVLLNDDYTPMEFVVKVLQKFFGKNQEEATRIMLQVHHEGRGICGVYVRDVAATRIAQVAQYARARQHPLQCIMEPV.

The protein belongs to the ClpS family. Binds to the N-terminal domain of the chaperone ClpA.

Its function is as follows. Involved in the modulation of the specificity of the ClpAP-mediated ATP-dependent protein degradation. In Bordetella avium (strain 197N), this protein is ATP-dependent Clp protease adapter protein ClpS.